Consider the following 487-residue polypeptide: Cysteine--tRNA ligase (487 aa).

Residue cysteine 29 coordinates Zn(2+). The 'HIGH' region signature appears at 31–41; it reads VTVYDFCHIGH. Cysteine 209, histidine 234, and glutamate 238 together coordinate Zn(2+). A 'KMSKS' region motif is present at residues 266-270; the sequence is KMSKS. Residue lysine 269 participates in ATP binding.

This sequence belongs to the class-I aminoacyl-tRNA synthetase family. In terms of assembly, monomer. It depends on Zn(2+) as a cofactor.

It is found in the cytoplasm. The enzyme catalyses tRNA(Cys) + L-cysteine + ATP = L-cysteinyl-tRNA(Cys) + AMP + diphosphate. The protein is Cysteine--tRNA ligase of Trichlorobacter lovleyi (strain ATCC BAA-1151 / DSM 17278 / SZ) (Geobacter lovleyi).